The primary structure comprises 447 residues: Gastrin/cholecystokinin type B receptor (447 aa).

Residues 1-57 (MELLKLNRSVQGTGPGPGASLCRPGAPLLNSSSVGNLSCEPPRIRGAGTRELELAIR) lie on the Extracellular side of the membrane. N-linked (GlcNAc...) asparagine glycans are attached at residues N7, N30, and N36. Residues 58–79 (ITLYAVIFLMSVGGNMLIIVVL) traverse the membrane as a helical segment. Topologically, residues 80-87 (GLSRRLRT) are cytoplasmic. Residues 88–109 (VTNAFLLSLAVSDLLLAVACMP) form a helical membrane-spanning segment. The Extracellular segment spans residues 110-131 (FTLLPNLMGTFIFGTVICKAVS). C127 and C205 are joined by a disulfide. A helical membrane pass occupies residues 132–150 (YLMGVSVSVSTLSLVAIAL). At 151–170 (ERYSAICRPLQARVWQTRSH) the chain is on the cytoplasmic side. Residues 171-189 (AARVIVATWLLSGLLMVPY) traverse the membrane as a helical segment. Over 190 to 219 (PVYTVVQPVGPRVLQCVHRWPSARVRQTWS) the chain is Extracellular. The helical transmembrane segment at 220-242 (VLLLLLLFFIPGVVMAVAYGLIS) threads the bilayer. The Cytoplasmic segment spans residues 243–333 (RELYLGLRFD…KLLAKKRVVR (91 aa)). Residues 258–285 (DSQSRVRNQGGLPGAVHQNGRCRPETGA) form a disordered region. Residues 334–355 (MLLVIVVLFFLCWLPVYSANTW) form a helical membrane-spanning segment. The Extracellular segment spans residues 356–373 (RAFDGPGAHRALSGAPIS). Residues 374-394 (FIHLLSYASACVNPLVYCFMH) form a helical membrane-spanning segment. Residues 395–447 (RRFRQACLETCARCCPRPPRARPRALPDEDPPTPSIASLSRLSYTTISTLGPG) lie on the Cytoplasmic side of the membrane. The S-palmitoyl cysteine moiety is linked to residue C408.

Belongs to the G-protein coupled receptor 1 family. Isoform 1 is expressed in brain, pancreas, stomach, the colon cancer cell line LoVo and the T-lymphoblastoma Jurkat, but not in heart, placenta, liver, lung, skeletal muscle, kidney or the stomach cancer cell line AGS. Expressed at high levels in the small cell lung cancer cell line NCI-H510, at lower levels in NCI-H345, NCI-H69 and GLC-28 cell lines, not expressed in GLC-19 cell line. Within the stomach, expressed at high levels in the mucosa of the gastric fundus and at low levels in the antrum and duodenum. Isoform 2 is present in pancreatic cancer cells and colorectal cancer cells, but not in normal pancreas or colonic mucosa. Isoform 3 is expressed in brain, pancreas, stomach, the stomach cancer cell line AGS and the colon cancer cell line LoVo.

It is found in the cell membrane. In terms of biological role, receptor for gastrin and cholecystokinin. The CCK-B receptors occur throughout the central nervous system where they modulate anxiety, analgesia, arousal, and neuroleptic activity. This receptor mediates its action by association with G proteins that activate a phosphatidylinositol-calcium second messenger system. Isoform 2 is constitutively activated and may regulate cancer cell proliferation via a gastrin-independent mechanism. This Homo sapiens (Human) protein is Gastrin/cholecystokinin type B receptor.